A 356-amino-acid polypeptide reads, in one-letter code: Protein SEC13 homolog (356 aa).

WD repeat units follow at residues 11 to 50, 54 to 95, 101 to 142, 149 to 205, 210 to 253, and 259 to 298; these read EHED…KALA, GHQG…DWTK, NHDS…GVWD, AHTI…WVEE, AHSD…SEWT, and TFDD…QWIR. The tract at residues 307–356 is disordered; the sequence is IQSKQPSHLPHSHSQQQQALQQHQQQAPSHPGPSSDSEHSSNLSNSQLSN. The span at 308 to 356 shows a compositional bias: low complexity; that stretch reads QSKQPSHLPHSHSQQQQALQQHQQQAPSHPGPSSDSEHSSNLSNSQLSN.

This sequence belongs to the WD repeat SEC13 family. Probable component of the nuclear pore complex (NPC). Component of the GATOR complex consisting of mio, Nup44A/Seh1, Im11, Nplr3, Nplr2, Wdr24, Wdr59 and Sec13. Within the GATOR complex, probable component of the GATOR2 subcomplex which is likely composed of mio, Nup44A/Seh1, Wdr24, Wdr59 and Sec13. Interacts with msk. Interacts (preferentially when phosphorylated) with Mad. The GATOR2 complex associates with unmet in the absence of S-adenosyl-L-methionine; the mio-Wdr24-Nup44A subcomplex is essential and sufficient for this interaction while Wdr59 and Sec13 are dispensable. This association acts as a nutrient sensor to inhibit mTORC1 signaling in the absence of methionine. As to expression, salivary glands.

Its subcellular location is the nucleus envelope. It localises to the nucleus. The protein resides in the nucleoplasm. The protein localises to the cytoplasm. It is found in the cytoskeleton. Its subcellular location is the microtubule organizing center. It localises to the centrosome. The protein resides in the nuclear pore complex. The protein localises to the cytoplasmic vesicle. It is found in the COPII-coated vesicle membrane. Its subcellular location is the endoplasmic reticulum membrane. It localises to the lysosome membrane. In terms of biological role, functions as a component of the nuclear pore complex (NPC) and the COPII coat. At the endoplasmic reticulum, SEC13 is involved in the biogenesis of COPII-coated vesicles. Recruited to transcriptionally active chromatin at the time of transcription initiation by RNA polymerase II. Required for proper expression of ecdysone-responsive genes such as Eip74EF and Eip75B during larval development. Required for reactivation of transcription after heat shock. Required for nuclear import of phosphorylated Mad via importin msk. Has no role in classical nuclear localization signal (cNLS)-dependent nuclear import via importin-beta. Its function is as follows. A component of the GATOR subcomplex GATOR2 which functions as an activator of the amino acid-sensing branch of the mTORC1 signaling pathway. The two GATOR subcomplexes, GATOR1 and GATOR2, regulate the mTORC1 pathway in order to mediate metabolic homeostasis, female gametogenesis and the response to amino acid limitation and complete starvation. GATOR2 activates the mTORC1 signaling pathway through the inhibition of the GATOR1 subcomplex, controlling the switch to cell proliferation and growth under nutrient replete conditions and during female oocyte development. The protein is Protein SEC13 homolog of Drosophila melanogaster (Fruit fly).